The sequence spans 370 residues: Acyl-CoA:lysophosphatidylglycerol acyltransferase 1 (370 aa).

Residues 22–42 (FAFMVANNLVAIPSYICYVII) form a helical membrane-spanning segment. An HXXXXD motif motif is present at residues 101 to 106 (HQATGD). The helical transmembrane segment at 342–362 (MWIFLIQSFAFLSGYLWYHII) threads the bilayer.

The protein belongs to the 1-acyl-sn-glycerol-3-phosphate acyltransferase family. Ubiquitous. Expressed in heart, kidney, liver, skin, intestine, and thymus. Highest expression is detected in brain and testis.

The protein resides in the endoplasmic reticulum membrane. The enzyme catalyses a 2-acyl-sn-glycero-3-phosphoethanolamine + octadecanoyl-CoA = 1-octadecanoyl-2-acyl-sn-glycero-3-phosphoethanolamine + CoA. It carries out the reaction 2-(9Z-octadecenoyl)-sn-glycero-3-phosphoethanolamine + octadecanoyl-CoA = 1-octadecanoyl-2-(9Z-octadecenoyl)-sn-glycero-3-phosphoethanolamine + CoA. The catalysed reaction is a 2-acyl-sn-glycero-3-phosphoethanolamine + hexadecanoyl-CoA = 1-hexadecanoyl-2-acyl-sn-glycero-3-phosphoethanolamine + CoA. It catalyses the reaction 2-(9Z-octadecenoyl)-sn-glycero-3-phosphoethanolamine + hexadecanoyl-CoA = 1-hexadecanoyl-2-(9Z-octadecenoyl)-sn-glycero-3-phosphoethanolamine + CoA. The enzyme catalyses 1-tetradecanoyl-sn-glycero-3-phospho-(1'-sn-glycerol) + hexadecanoyl-CoA = 1-tetradecanoyl-2-hexadecanoyl-sn-glycero-3-phospho-(1'-sn-glycerol) + CoA. It carries out the reaction 1-hexadecanoyl-sn-glycero-3-phospho-(1'-sn-glycerol) + dodecanoyl-CoA = 1-hexadecanoyl-2-dodecanoyl-sn-glycero-3-phospho-(1'-sn-glycerol) + CoA. The catalysed reaction is 1-hexadecanoyl-sn-glycero-3-phospho-(1'-sn-glycerol) + hexadecanoyl-CoA = 1,2-dihexadecanoyl-sn-glycero-3-phospho-(1'-sn-glycerol) + CoA. It catalyses the reaction 1-hexadecanoyl-sn-glycero-3-phospho-(1'-sn-glycerol) + octadecanoyl-CoA = 1-hexadecanoyl-2-octadecanoyl-sn-glycero-3-phospho-(1'-sn-glycerol) + CoA. The enzyme catalyses 1-octadecanoyl-sn-glycero-3-phospho-(1'-sn-glycerol) + hexadecanoyl-CoA = 1-octadecanoyl-2-hexadecanoyl-sn-glycero-3-phospho-(1'-sn-glycerol) + CoA. It carries out the reaction 1-(9Z-octadecenoyl)-sn-glycero-3-phospho-(1'-sn-glycerol) + dodecanoyl-CoA = 1-(9Z-octadecenoyl)-2-dodecanoyl-sn-glycero-3-phospho-(1'-sn-glycerol) + CoA. The catalysed reaction is 1-hexadecanoyl-sn-glycero-3-phospho-(1'-sn-glycerol) + (9Z)-octadecenoyl-CoA = 1-hexadecanoyl-2-(9Z-octadecenoyl)-sn-glycero-3-phospho-(1'-sn-glycerol) + CoA. It catalyses the reaction 1-(9Z-octadecenoyl)-sn-glycero-3-phospho-(1'-sn-glycerol) + hexadecanoyl-CoA = 1-(9Z-octadecenoyl)-2-hexadecanoyl-sn-glycero-3-phospho-(1'-sn-glycerol) + CoA. The enzyme catalyses 1-(9Z-octadecenoyl)-sn-glycero-3-phospho-(1'-sn-glycerol) + (9Z)-octadecenoyl-CoA = 1,2-di-(9Z-octadecenoyl)-sn-glycero-3-phospho-(1'-sn-glycerol) + CoA. It carries out the reaction a 2-acylglycerol + an acyl-CoA = a 1,2-diacylglycerol + CoA. The catalysed reaction is a 2-acylglycerol + hexadecanoyl-CoA = a 1-hexadecanoyl-2-acylglycerol + CoA. It catalyses the reaction a 1-acylglycerol + hexadecanoyl-CoA = an hexadecanoyl-acylglycerol + CoA. The enzyme catalyses a 2-acyl-sn-glycero-3-phosphocholine + an acyl-CoA = a 1,2-diacyl-sn-glycero-3-phosphocholine + CoA. It carries out the reaction 2-(9Z-octadecenoyl)-sn-glycero-3-phosphocholine + octadecanoyl-CoA = 1-octadecanoyl-2-(9Z-octadecenoyl)-sn-glycero-3-phosphocholine + CoA. The catalysed reaction is 2-(9Z,12Z-octadecadienoyl)-sn-glycero-3-phosphocholine + octadecanoyl-CoA = 1-octadecanoyl-2-(9Z,12Z)-octadecadienoyl-sn-glycero-3-phosphocholine + CoA. It catalyses the reaction 2-(5Z,8Z,11Z,14Z)-eicosatetraenoyl-sn-glycero-3-phosphocholine + octadecanoyl-CoA = 1-octadecanoyl-2-(5Z,8Z,11Z,14Z-eicosatetraenoyl)-sn-glycero-3-phosphocholine + CoA. The enzyme catalyses 2-(9Z-octadecenoyl)-sn-glycero-3-phosphocholine + hexadecanoyl-CoA = 1-hexadecanoyl-2-(9Z-octadecenoyl)-sn-glycero-3-phosphocholine + CoA. It carries out the reaction 2-(9Z-octadecenoyl)-sn-glycero-3-phospho-L-serine + hexadecanoyl-CoA = 1-hexadecanoyl-2-(9Z-octadecenoyl)-sn-glycero-3-phospho-L-serine + CoA. The catalysed reaction is 2-(4Z,7Z,10Z,13Z,16Z,19Z-docosahexaenoyl)-sn-glycero-3-phosphocholine + octadecanoyl-CoA = 1-octadecanoyl-2-(4Z,7Z,10Z,13Z,16Z,19Z-docosahexaenoyl)-sn-glycero-3-phosphocholine + CoA. It catalyses the reaction 1-(9Z-octadecenoyl)-sn-glycero-3-phospho-L-serine + octadecanoyl-CoA = 1-(9Z-octadecenoyl)-2-octadecanoyl-sn-glycero-3-phospho-L-serine + CoA. The enzyme catalyses a 2-acyl-sn-glycero-3-phosphoethanolamine + a fatty acyl-CoA = a 1,2-diacyl-sn-glycero-3-phosphoethanolamine + CoA. Functionally, lysophospholipid acyltransferase involved in fatty acyl chain remodeling of glycerophospholipids in the endoplasmic reticulum membrane. Selectively catalyzes the transfer and esterification of saturated long-chain fatty acids from acyl-CoA to the sn-1 position of 1-lyso-2-acyl phosphatidylethanolamines (1-lyso-PE, LPE), with a preference for stearoyl CoA over palmitoyl CoA as acyl donor. Acts in concert with an unknown phospholipase A1 to convert palmitate PE species into stearate ones. Provides substrates to the PE methylation pathway, controlling stearate/palmitate composition of PE and phosphatidylcholine (PC) species with an overall impact on de novo hepatic lipid synthesis, body fat content and life span. Can acylate lysophosphatidylglycerols (LPG) using various saturated fatty acyl-CoAs as acyl donors. Can also acylate monoacylglycerols with a preference for 2-monoacylglycerols over 1-monoacylglycerols. Has no activity toward lysophosphatidic acids (LPA) and lysophosphatidylcholines (LPC). The chain is Acyl-CoA:lysophosphatidylglycerol acyltransferase 1 from Mus musculus (Mouse).